Reading from the N-terminus, the 664-residue chain is Pentatricopeptide repeat-containing protein At1g10910, chloroplastic (664 aa).

The transit peptide at 1–72 directs the protein to the chloroplast; that stretch reads METPLLVGLE…KRHSNSYLAR (72 aa). 9 PPR repeats span residues 165–199, 200–235, 236–270, 271–305, 306–340, 341–375, 376–406, 411–445, and 446–480; these read NVYICNSILSCLVKNGKLDSCIKLFDQMKRDGLKP, DVVTYNTLLAGCIKVKNGYPKAIELIGELPHNGIQM, DSVMYGTVLAICASNGRSEEAENFIQQMKVEGHSP, NIYHYSSLLNSYSWKGDYKKADELMTEMKSIGLVP, NKVMMTTLLKVYIKGGLFDRSRELLSELESAGYAE, NEMPYCMLMDGLSKAGKLEEARSIFDDMKGKGVRS, DGYANSIMISALCRSKRFKEAKELSRDSETT, DLVMLNTMLCAYCRAGEMESVMRMMKKMDEQAVSP, and DYNTFHILIKYFIKEKLHLLAYQTTLDMHSKGHRL.

Belongs to the PPR family. P subfamily.

It localises to the plastid. The protein resides in the chloroplast. This Arabidopsis thaliana (Mouse-ear cress) protein is Pentatricopeptide repeat-containing protein At1g10910, chloroplastic.